The following is a 513-amino-acid chain: Protein phosphatase 1H (513 aa).

A Phosphoserine modification is found at Ser-7. The PPM-type phosphatase domain occupies 77-506; the sequence is ATGYAEVINA…DDISVYVIPL (430 aa). Positions 110 to 133 are disordered; that stretch reads ITSTPNRNSKRRSSLPNGEGLQLK. Thr-113 is subject to Phosphothreonine. 2 positions are modified to phosphoserine: Ser-123 and Ser-210. Position 212 is an omega-N-methylarginine (Arg-212). Phosphoserine is present on Ser-220. Thr-223 carries the post-translational modification Phosphothreonine. Ser-421 is modified (phosphoserine).

It belongs to the PP2C family.

The protein resides in the nucleus. It localises to the cytoplasm. The enzyme catalyses O-phospho-L-seryl-[protein] + H2O = L-seryl-[protein] + phosphate. It carries out the reaction O-phospho-L-threonyl-[protein] + H2O = L-threonyl-[protein] + phosphate. Functionally, dephosphorylates CDKN1B at 'Thr-187', thus removing a signal for proteasomal degradation. This is Protein phosphatase 1H (Ppm1h) from Rattus norvegicus (Rat).